The chain runs to 242 residues: Lactate utilization protein A 2 (242 aa).

Belongs to the LutA/YkgE family.

Its function is as follows. Is involved in L-lactate degradation and allows cells to grow with lactate as the sole carbon source. This is Lactate utilization protein A 2 from Bacillus cereus (strain AH820).